Consider the following 77-residue polypeptide: uncharacterized protein (77 aa).

Residues 1–15 (MNRTSESVEPQQNEK) are compositionally biased toward polar residues. Disordered stretches follow at residues 1–20 (MNRT…AVHW) and 31–52 (TYSN…QRTF). Positions 33-44 (SNEDDEDNEEGD) are enriched in acidic residues.

This is an uncharacterized protein from Schizosaccharomyces pombe (strain 972 / ATCC 24843) (Fission yeast).